A 348-amino-acid chain; its full sequence is DNA ligase C1 (348 aa).

K32 (N6-AMP-lysine intermediate) is an active-site residue.

The protein belongs to the ATP-dependent DNA ligase family. The cofactor is a divalent metal cation.

The catalysed reaction is ATP + (deoxyribonucleotide)n-3'-hydroxyl + 5'-phospho-(deoxyribonucleotide)m = (deoxyribonucleotide)n+m + AMP + diphosphate.. In terms of biological role, DNA ligase that seals nicks in double-stranded DNA during DNA replication, DNA recombination and DNA repair. Has weak intrinsic nick joining activities and accumulates DNA-adenylate. Acts as a backup for LigD in the Ku-LigD-dependent NHEJ pathway. This Mycolicibacterium smegmatis (strain ATCC 700084 / mc(2)155) (Mycobacterium smegmatis) protein is DNA ligase C1 (ligC).